The following is a 302-amino-acid chain: Sulfate adenylyltransferase subunit 2 (302 aa).

The protein belongs to the PAPS reductase family. CysD subfamily. As to quaternary structure, heterodimer composed of CysD, the smaller subunit, and CysN.

It catalyses the reaction sulfate + ATP + H(+) = adenosine 5'-phosphosulfate + diphosphate. Its pathway is sulfur metabolism; hydrogen sulfide biosynthesis; sulfite from sulfate: step 1/3. Functionally, with CysN forms the ATP sulfurylase (ATPS) that catalyzes the adenylation of sulfate producing adenosine 5'-phosphosulfate (APS) and diphosphate, the first enzymatic step in sulfur assimilation pathway. APS synthesis involves the formation of a high-energy phosphoric-sulfuric acid anhydride bond driven by GTP hydrolysis by CysN coupled to ATP hydrolysis by CysD. This is Sulfate adenylyltransferase subunit 2 from Escherichia coli O157:H7 (strain EC4115 / EHEC).